The chain runs to 1361 residues: DNA-directed RNA polymerase subunit beta (1361 aa).

The protein belongs to the RNA polymerase beta chain family. As to quaternary structure, the RNAP catalytic core consists of 2 alpha, 1 beta, 1 beta' and 1 omega subunit. When a sigma factor is associated with the core the holoenzyme is formed, which can initiate transcription.

It catalyses the reaction RNA(n) + a ribonucleoside 5'-triphosphate = RNA(n+1) + diphosphate. Its function is as follows. DNA-dependent RNA polymerase catalyzes the transcription of DNA into RNA using the four ribonucleoside triphosphates as substrates. The protein is DNA-directed RNA polymerase subunit beta of Dichelobacter nodosus (strain VCS1703A).